The chain runs to 485 residues: Glutamate--tRNA ligase (485 aa).

Positions 11–21 (PSPTGHLHIGN) match the 'HIGH' region motif. A 'KMSKS' region motif is present at residues 252-256 (KLSKR). Lys255 contacts ATP.

This sequence belongs to the class-I aminoacyl-tRNA synthetase family. Glutamate--tRNA ligase type 1 subfamily. Monomer.

Its subcellular location is the cytoplasm. The enzyme catalyses tRNA(Glu) + L-glutamate + ATP = L-glutamyl-tRNA(Glu) + AMP + diphosphate. Catalyzes the attachment of glutamate to tRNA(Glu) in a two-step reaction: glutamate is first activated by ATP to form Glu-AMP and then transferred to the acceptor end of tRNA(Glu). The polypeptide is Glutamate--tRNA ligase (Bacillus mycoides (strain KBAB4) (Bacillus weihenstephanensis)).